We begin with the raw amino-acid sequence, 439 residues long: Hemagglutinin-esterase (439 aa).

An N-terminal signal peptide occupies residues 1 to 22; that stretch reads MGRMCIAMAPRTLLLLIGCQLV. An esterase domain 1 region spans residues 12–132; the sequence is TLLLLIGCQL…DNNKWMGNKA (121 aa). Topologically, residues 23–407 are virion surface; that stretch reads FGFNEPINIV…PVCLYDPLPV (385 aa). Residue S45 is the Nucleophile of the active site. Cysteines 49 and 70 form a disulfide. N94 is a glycosylation site (N-linked (GlcNAc...) asparagine; by host). An intrachain disulfide couples C118 to C167. Positions 133–281 are receptor binding; it reads RFYALLYKKM…GNYKAVSLEY (149 aa). N-linked (GlcNAc...) asparagine; by host glycans are attached at residues N196, N246, N309, and N316. 2 cysteine pairs are disulfide-bonded: C202–C291 and C210–C264. The tract at residues 282–395 is esterase domain 2; the sequence is LLTIPSKAIC…HCPTAANIGY (114 aa). C322 and C327 form a disulfide bridge. A glycan (N-linked (GlcNAc...) asparagine; by host) is linked at N331. Active-site charge relay system residues include D342 and H345. Residues N360 and N374 are each glycosylated (N-linked (GlcNAc...) asparagine; by host). The cysteines at positions 363 and 387 are disulfide-linked. Residues 408-428 form a helical membrane-spanning segment; that stretch reads ILLGVLLGIAVLIIVFLILYF. Topologically, residues 429 to 439 are intravirion; the sequence is MADSSVRLHEA.

Belongs to the influenza type C/coronaviruses hemagglutinin-esterase family. In terms of assembly, homodimer; disulfide-linked. Forms a complex with the M protein in the pre-Golgi. Associates then with S-M complex to form a ternary complex S-M-HE. N-glycosylated in the host RER.

Its subcellular location is the virion membrane. It localises to the host cell membrane. It carries out the reaction N-acetyl-9-O-acetylneuraminate + H2O = N-acetylneuraminate + acetate + H(+). The catalysed reaction is N-acetyl-4-O-acetylneuraminate + H2O = N-acetylneuraminate + acetate + H(+). In terms of biological role, structural protein that makes short spikes at the surface of the virus. Contains receptor binding and receptor-destroying activities. Mediates de-O-acetylation of N-acetyl-4-O-acetylneuraminic acid, which is probably the receptor determinant recognized by the virus on the surface of erythrocytes and susceptible cells. This receptor-destroying activity is important for virus release as it probably helps preventing self-aggregation and ensures the efficient spread of the progeny virus from cell to cell. May serve as a secondary viral attachment protein for initiating infection, the spike protein being the major one. May become a target for both the humoral and the cellular branches of the immune system. The polypeptide is Hemagglutinin-esterase (Rat coronavirus (strain 681) (RCV-SDAV)).